The primary structure comprises 1278 residues: ABC transporter B family member 11 (1278 aa).

Basic and acidic residues-rich tracts occupy residues 1–13 and 21–35; these read MNGD…DSVS and SPKE…EKSE. Residues 1–35 form a disordered region; that stretch reads MNGDGAREGDSVSHEPSTSKSPKEGEETKKEEKSE. 6 helical membrane passes run 55 to 75, 106 to 126, 182 to 202, 205 to 225, 285 to 305, and 314 to 334; these read VLLM…LPFM, FVYL…CWMI, FIQL…KGWL, LVML…ALIV, GLGL…AIWF, and GYTG…SMSL. The ABC transmembrane type-1 1 domain maps to 58-346; that stretch reads MICGSIGAIG…TSPCVTAFAA (289 aa). Residues 381–617 enclose the ABC transporter 1 domain; it reads IELKDVHFSY…SEGAYSQLIR (237 aa). ATP is bound at residue 416–423; the sequence is GESGSGKS. Asn-483, Asn-568, and Asn-653 each carry an N-linked (GlcNAc...) asparagine glycan. The segment covering 629 to 654 has biased composition (polar residues); sequence ELSSGSSFRNSNLKKSMEGTSSVGNS. The interval 629–656 is disordered; that stretch reads ELSSGSSFRNSNLKKSMEGTSSVGNSSR. An ABC transmembrane type-1 2 domain is found at 710 to 997; the sequence is LLLGTVAAAI…SSTFAPDSSK (288 aa). The next 2 membrane-spanning stretches (helical) occupy residues 711-731 and 751-771; these read LLGT…GILI and FWAI…PTQM. An N-linked (GlcNAc...) asparagine glycan is attached at Asn-806. 4 helical membrane-spanning segments follow: residues 824–844, 845–865, 932–952, and 971–991; these read ALVG…ASGL, IIAF…LPLI, GFIS…VYAT, and VFQV…SSTF. Positions 1032–1271 constitute an ABC transporter 2 domain; that stretch reads IELRHLSFTY…EGGVYASLVQ (240 aa). Position 1067 to 1074 (1067 to 1074) interacts with ATP; it reads GESGSGKS. N-linked (GlcNAc...) asparagine glycans are attached at residues Asn-1121 and Asn-1222.

It belongs to the ABC transporter superfamily. ABCB family. Multidrug resistance exporter (TC 3.A.1.201) subfamily. Present in roots and flower buds.

It localises to the membrane. The catalysed reaction is (indol-3-yl)acetate(in) + ATP + H2O = (indol-3-yl)acetate(out) + ADP + phosphate + H(+). Functionally, involved in the regulation of auxin transport required for pistil elongation. The sequence is that of ABC transporter B family member 11 from Arabidopsis thaliana (Mouse-ear cress).